The sequence spans 77 residues: Sec-independent protein translocase protein TatA (77 aa).

A helical membrane pass occupies residues 1–21 (MGSLSIWHWIVVIAVVLLLFG). Positions 43-60 (MQDDDKAPEKTEPVKSID) are enriched in basic and acidic residues. The disordered stretch occupies residues 43–77 (MQDDDKAPEKTEPVKSIDHGATPSATRTDVGSKAV).

It belongs to the TatA/E family. As to quaternary structure, the Tat system comprises two distinct complexes: a TatABC complex, containing multiple copies of TatA, TatB and TatC subunits, and a separate TatA complex, containing only TatA subunits. Substrates initially bind to the TatABC complex, which probably triggers association of the separate TatA complex to form the active translocon.

It is found in the cell inner membrane. In terms of biological role, part of the twin-arginine translocation (Tat) system that transports large folded proteins containing a characteristic twin-arginine motif in their signal peptide across membranes. TatA could form the protein-conducting channel of the Tat system. The protein is Sec-independent protein translocase protein TatA of Bradyrhizobium sp. (strain BTAi1 / ATCC BAA-1182).